The primary structure comprises 1194 residues: IQ motif and SEC7 domain-containing protein 3 (1194 aa).

The stretch at 20–56 (AIVQNQQSLIHTQRQRIDELERRLDELSAENRSLWEH) forms a coiled coil. 2 disordered regions span residues 62 to 149 (AQPP…EKER) and 229 to 272 (GRPS…QQPA). Over residues 63–78 (QPPPGLVPPPSAPLPA) the composition is skewed to pro residues. The segment covering 79-92 (PAATAPAATAAQEP) has biased composition (low complexity). Residues 122-133 (PSSRVQTPQSPH) show a composition bias toward polar residues. Serine 255 is modified (phosphoserine). Residues 311 to 340 (SRRAACTIQTAFRQYQLSKNFEKIRNSLLE) enclose the IQ domain. Disordered stretches follow at residues 439–471 (SAGQ…QGHS) and 515–610 (PAAV…KSAK). Low complexity-rich tracts occupy residues 561-572 (VAEAVVEEAVAT) and 600-610 (SSSSASTKSAK). The SEC7 domain maps to 646–839 (TLSTDTLRKR…VGIYERIQQK (194 aa)). One can recognise a PH domain in the interval 852–985 (TKVEKSIVGM…LKESIAEVTE (134 aa)). Disordered regions lie at residues 1002-1099 (KTLS…PTPP) and 1137-1175 (SSDS…HQFC). Residues 1024-1035 (AKREAMAGEKAT) are compositionally biased toward basic and acidic residues. Residues 1036–1052 (ESSGEVSIHNRLQTFQH) show a composition bias toward polar residues. Pro residues-rich tracts occupy residues 1064-1099 (APSP…PTPP) and 1159-1169 (PPLPPPPPPYN).

The protein belongs to the BRAG family. Interacts with DLG1 and DLG4. Interacts with GPHN. Expressed in brain. Localized to dendrites, as well as somas of neuronal cells.

It is found in the cytoplasm. It localises to the postsynaptic density. Functionally, acts as a guanine nucleotide exchange factor (GEF) for ARF1. This Rattus norvegicus (Rat) protein is IQ motif and SEC7 domain-containing protein 3 (Iqsec3).